The primary structure comprises 75 residues: Putative defensin-like protein 119 (75 aa).

The N-terminal stretch at 1–25 (MAKSTIFAIFMIVFVLGMVTKETKG) is a signal peptide. 4 disulfide bridges follow: C29-C73, C39-C58, C44-C67, and C48-C69.

Belongs to the DEFL family.

It is found in the secreted. The protein is Putative defensin-like protein 119 (LCR53) of Arabidopsis thaliana (Mouse-ear cress).